The chain runs to 117 residues: Large ribosomal subunit protein uL18 (117 aa).

Belongs to the universal ribosomal protein uL18 family. As to quaternary structure, part of the 50S ribosomal subunit; part of the 5S rRNA/L5/L18/L25 subcomplex. Contacts the 5S and 23S rRNAs.

Functionally, this is one of the proteins that bind and probably mediate the attachment of the 5S RNA into the large ribosomal subunit, where it forms part of the central protuberance. The polypeptide is Large ribosomal subunit protein uL18 (Vibrio proteolyticus (Aeromonas proteolytica)).